We begin with the raw amino-acid sequence, 715 residues long: Fatty acid oxidation complex subunit alpha (715 aa).

Residues 1–189 are enoyl-CoA hydratase/isomerase; the sequence is MIYQGETLSV…KVGAIDAVVA (189 aa). Aspartate 296 lines the substrate pocket. The 3-hydroxyacyl-CoA dehydrogenase stretch occupies residues 311-715; the sequence is AKATRHAAVL…EMAAQGKTFY (405 aa). NAD(+)-binding positions include methionine 325, aspartate 344, 401-403, lysine 408, and serine 430; that span reads VVE. The active-site For 3-hydroxyacyl-CoA dehydrogenase activity is histidine 451. Asparagine 454 contributes to the NAD(+) binding site. Positions 501 and 661 each coordinate substrate.

This sequence in the N-terminal section; belongs to the enoyl-CoA hydratase/isomerase family. In the C-terminal section; belongs to the 3-hydroxyacyl-CoA dehydrogenase family. As to quaternary structure, heterotetramer of two alpha chains (FadB) and two beta chains (FadA).

It catalyses the reaction a (3S)-3-hydroxyacyl-CoA + NAD(+) = a 3-oxoacyl-CoA + NADH + H(+). The enzyme catalyses a (3S)-3-hydroxyacyl-CoA = a (2E)-enoyl-CoA + H2O. It carries out the reaction a 4-saturated-(3S)-3-hydroxyacyl-CoA = a (3E)-enoyl-CoA + H2O. The catalysed reaction is (3S)-3-hydroxybutanoyl-CoA = (3R)-3-hydroxybutanoyl-CoA. It catalyses the reaction a (3Z)-enoyl-CoA = a 4-saturated (2E)-enoyl-CoA. The enzyme catalyses a (3E)-enoyl-CoA = a 4-saturated (2E)-enoyl-CoA. It functions in the pathway lipid metabolism; fatty acid beta-oxidation. In terms of biological role, involved in the aerobic and anaerobic degradation of long-chain fatty acids via beta-oxidation cycle. Catalyzes the formation of 3-oxoacyl-CoA from enoyl-CoA via L-3-hydroxyacyl-CoA. It can also use D-3-hydroxyacyl-CoA and cis-3-enoyl-CoA as substrate. The chain is Fatty acid oxidation complex subunit alpha from Aeromonas salmonicida (strain A449).